The chain runs to 154 residues: MSEEKLKKKSFEIQRIYIRDASFEAPNTPNIFHKKWDPEIKFNLSTVSKKLKPNIFETNLQVRVIVKSEENLVFLCDVHQVGIFFISCLDEQELKHCLGSYCPNILFPYARTCISSLVSYGSFPQLNLSPIDFDDIFCKNLKSKRNNFYQKENI.

The protein belongs to the SecB family. As to quaternary structure, homotetramer, a dimer of dimers. One homotetramer interacts with 1 SecA dimer.

It is found in the cytoplasm. Its function is as follows. One of the proteins required for the normal export of preproteins out of the cell cytoplasm. It is a molecular chaperone that binds to a subset of precursor proteins, maintaining them in a translocation-competent state. It also specifically binds to its receptor SecA. The chain is Protein-export protein SecB from Buchnera aphidicola subsp. Schizaphis graminum (strain Sg).